We begin with the raw amino-acid sequence, 1757 residues long: Serine/threonine-protein kinase WNK3 (1757 aa).

A disordered region spans residues 1 to 25 (MATDSGEPASTEDSEKPDGVSFENR). Serine 62 bears the Phosphoserine mark. Over residues 66-82 (TEDDKVAESSRRDERKA) the composition is skewed to basic and acidic residues. The interval 66–85 (TEDDKVAESSRRDERKAATN) is disordered. The Protein kinase domain maps to 146 to 404 (LKFDIELGRG…IKDLLNHAFF (259 aa)). ATP-binding positions include 226 to 229 (TELM) and lysine 276. Aspartate 293 serves as the catalytic Proton acceptor. 2 positions are modified to phosphoserine; by autocatalysis: serine 303 and serine 307. An interaction with KLHL3 region spans residues 536 to 546 (EYEETEVDQHV). Threonine 540 is subject to Phosphothreonine. Polar residues-rich tracts occupy residues 551–570 (LQGK…SSEP), 578–604 (SDTS…KLTQ), and 674–689 (SVKE…SGNG). Disordered regions lie at residues 551–604 (LQGK…KLTQ) and 674–705 (SVKE…PRPE). Serine 1039 bears the Phosphoserine mark. Residues 1404–1422 (VATEKNVTSTTEVSVQSGS) are compositionally biased toward polar residues. Disordered regions lie at residues 1404-1440 (VATE…QTCT), 1479-1498 (SLFY…EIED), and 1536-1574 (ATKD…MTHS). A compositionally biased stretch (low complexity) spans 1479-1491 (SLFYSPSSPMSSD). 2 positions are modified to phosphoserine: serine 1550 and serine 1553. Basic residues predominate over residues 1555–1566 (RRPRSFKSKLRS). Position 1595 is a phosphoserine (serine 1595). Disordered stretches follow at residues 1621-1650 (HFPS…CEST) and 1734-1757 (PGMN…PGPK). Residues 1624–1637 (SKPSLNQLKQSQQK) are compositionally biased toward low complexity. Positions 1641 to 1650 (ENWNKSCEST) are enriched in polar residues. Positions 1742–1757 (PAPPVQNPASIPPGPK) are enriched in pro residues.

It belongs to the protein kinase superfamily. Ser/Thr protein kinase family. WNK subfamily. As to quaternary structure, interacts with WNK1 and WNK4. Mg(2+) serves as cofactor. Autophosphorylated at Ser-303 and Ser-307, promoting its activity. Phosphorylation at Thr-540 prevents interaction with KLHL3 and subsequent ubiquitination and degradation by the BCR(KLHL3) complex. Post-translationally, ubiquitinated by the BCR(KLHL2) complex, leading to its degradation. Ubiquitinated by the BCR(KLHL3) complex, leading to its degradation. As to expression, expressed in pancreatic duct.

It localises to the cytoplasm. It catalyses the reaction L-seryl-[protein] + ATP = O-phospho-L-seryl-[protein] + ADP + H(+). The enzyme catalyses L-threonyl-[protein] + ATP = O-phospho-L-threonyl-[protein] + ADP + H(+). Its activity is regulated as follows. Activated in response to hyperosmotic stress: cell shrinkage promotes formation of a membraneless compartment that concentrates WNK3 with its substrates, OXSR1/OSR1 and STK39/SPAK. Activation requires autophosphorylation of Ser-307 and, to a lower extent, Ser-303. Autophosphorylation and subsequent activation is inhibited by increases in intracellular ionic strength: Cl(-) potently inhibits WNK3 kinase activity via direct binding. Also inhibited by K(+) ions. Kinase activity is inhibited by WNK4. Serine/threonine-protein kinase component of the WNK3-SPAK/OSR1 kinase cascade, which plays an important role in the regulation of electrolyte homeostasis and regulatory volume increase in response to hyperosmotic stress. WNK3 mediates regulatory volume increase in response to hyperosmotic stress by acting as a molecular crowding sensor, which senses cell shrinkage and mediates formation of a membraneless compartment by undergoing liquid-liquid phase separation. The membraneless compartment concentrates WNK3 with its substrates, OXSR1/OSR1 and STK39/SPAK, promoting WNK3-dependent phosphorylation and activation of downstream kinases OXSR1/OSR1 and STK39/SPAK. Following activation, OXSR1/OSR1 and STK39/SPAK catalyze phosphorylation of ion cotransporters SLC12A1/NKCC2, SLC12A2/NKCC1, SLC12A3/NCC, SLC12A4/KCC1, SLC12A5/KCC2 or SLC12A6/KCC3, regulating their activity. Phosphorylation of Na-K-Cl cotransporters SLC12A2/NKCC1 and SLC12A2/NKCC1 promote their activation and ion influx; simultaneously, phosphorylation of K-Cl cotransporters SLC12A4/KCC1, SLC12A5/KCC2 and SLC12A6/KCC3 inhibits its activity, blocking ion efflux. Phosphorylates WNK4, possibly regulating the activity of SLC12A3/NCC. May also phosphorylate NEDD4L. Also acts as a scaffold protein independently of its protein kinase activity: negatively regulates cell membrane localization of various transporters and channels, such as KCNJ1 and SLC26A9. Increases Ca(2+) influx mediated by TRPV5 and TRPV6 by enhancing their membrane expression level via a kinase-dependent pathway. The chain is Serine/threonine-protein kinase WNK3 from Mus musculus (Mouse).